Consider the following 680-residue polypeptide: DNA-directed RNA polymerase subunit beta' (680 aa).

Residues Cys69, Cys71, Cys87, and Cys90 each contribute to the Zn(2+) site. Mg(2+) contacts are provided by Asp489, Asp491, and Asp493.

Belongs to the RNA polymerase beta' chain family. RpoC1 subfamily. In plastids the minimal PEP RNA polymerase catalytic core is composed of four subunits: alpha, beta, beta', and beta''. When a (nuclear-encoded) sigma factor is associated with the core the holoenzyme is formed, which can initiate transcription. Mg(2+) serves as cofactor. Requires Zn(2+) as cofactor.

Its subcellular location is the plastid. The protein localises to the chloroplast. It carries out the reaction RNA(n) + a ribonucleoside 5'-triphosphate = RNA(n+1) + diphosphate. Its function is as follows. DNA-dependent RNA polymerase catalyzes the transcription of DNA into RNA using the four ribonucleoside triphosphates as substrates. The sequence is that of DNA-directed RNA polymerase subunit beta' from Lobularia maritima (Sweet alyssum).